The following is a 79-amino-acid chain: uncharacterized protein (79 aa).

A signal peptide spans 1–24 (MKMNPCTVILCKSLFFFCLFQVDC). N-linked (GlcNAc...) asparagine glycosylation is present at asparagine 33.

It localises to the secreted. This is an uncharacterized protein from Saccharomyces cerevisiae (strain ATCC 204508 / S288c) (Baker's yeast).